We begin with the raw amino-acid sequence, 282 residues long: Tumor necrosis factor ligand superfamily member 6 (282 aa).

Residues 1-82 (MQQPFNYPYP…KKKRDHNAGL (82 aa)) lie on the Cytoplasmic side of the membrane. Positions 30 to 73 (FPCPASVPGRPGQRRPPPPPPPPPPPPTLLPSRPLPPLPPPSLK) are disordered. Pro residues predominate over residues 43–71 (RRPPPPPPPPPPPPTLLPSRPLPPLPPPS). The helical; Signal-anchor for type II membrane protein transmembrane segment at 83 to 103 (CLLVMFFMVLVALVGLGLGMF) threads the bilayer. At 104 to 282 (QLFHLQKELT…SKTFFGLYKL (179 aa)) the chain is on the extracellular side. Over residues 119–132 (ASQRHTESSLEKQI) the composition is skewed to basic and acidic residues. The disordered stretch occupies residues 119-140 (ASQRHTESSLEKQIGHPNLPSE). Residues 146-282 (KVAHLTGKPN…SKTFFGLYKL (137 aa)) enclose the THD domain. A glycan (N-linked (GlcNAc...) asparagine) is linked at Asn185. Residues Cys203 and Cys234 are joined by a disulfide bond. N-linked (GlcNAc...) asparagine glycosylation is found at Asn251 and Asn261.

This sequence belongs to the tumor necrosis factor family. As to quaternary structure, homotrimer. Interacts with ARHGAP9, BAIAP2L1, BTK, CACNB3, CACNB4, CRK, DLG2, DNMBP, DOCK4, EPS8L3, FGR, FYB1, FYN, HCK, ITK, ITSN2, KALRN, LYN, MACC1, MIA, MPP4, MYO15A, NCF1, NCK1, NCK2, NCKIPSD, OSTF1, PIK3R1, PSTPIP1, RIMBP3C, SAMSN1, SH3GL3, SH3PXD2B, SH3PXD2A, SH3RF2, SKAP2, SNX33, SNX9, SORBS3, SPTA1, SRC, SRGAP1, SRGAP2, SRGAP3, TEC, TJP3 and YES1. Post-translationally, the soluble form derives from the membrane form by proteolytic processing. The membrane-bound form undergoes two successive intramembrane proteolytic cleavages. The first one is processed by ADAM10 producing an N-terminal fragment, which lacks the receptor-binding extracellular domain. This ADAM10-processed FasL (FasL APL) remnant form is still membrane anchored and further processed by SPPL2A that liberates the FasL intracellular domain (FasL ICD). FasL shedding by ADAM10 is a prerequisite for subsequent intramembrane cleavage by SPPL2A in T-cells. Phosphorylated by FGR on tyrosine residues; this is required for ubiquitination and subsequent internalization. In terms of processing, N-glycosylated. Glycosylation enhances apoptotic activity. Post-translationally, monoubiquitinated.

Its subcellular location is the cell membrane. The protein localises to the cytoplasmic vesicle lumen. It localises to the lysosome lumen. It is found in the secreted. The protein resides in the nucleus. Cytokine that binds to TNFRSF6/FAS, a receptor that transduces the apoptotic signal into cells. Involved in cytotoxic T-cell-mediated apoptosis, natural killer cell-mediated apoptosis and in T-cell development. Initiates fratricidal/suicidal activation-induced cell death (AICD) in antigen-activated T-cells contributing to the termination of immune responses. TNFRSF6/FAS-mediated apoptosis also has a role in the induction of peripheral tolerance. Binds to TNFRSF6B/DcR3, a decoy receptor that blocks apoptosis. In terms of biological role, induces FAS-mediated activation of NF-kappa-B, initiating non-apoptotic signaling pathways. Can induce apoptosis but does not appear to be essential for this process. Its function is as follows. Cytoplasmic form induces gene transcription inhibition. The protein is Tumor necrosis factor ligand superfamily member 6 (FASLG) of Sus scrofa (Pig).